The sequence spans 97 residues: Small ribosomal subunit protein uS19 (97 aa).

The protein belongs to the universal ribosomal protein uS19 family.

In terms of biological role, protein S19 forms a complex with S13 that binds strongly to the 16S ribosomal RNA. In Pelagibacter ubique (strain HTCC1062), this protein is Small ribosomal subunit protein uS19.